Reading from the N-terminus, the 317-residue chain is Protein CbxX, chromosomal (317 aa).

Residues 1–21 (MSAPETTAPLQPPAAPAASLP) form a disordered region. 85 to 92 (GNPGTGKT) is an ATP binding site.

The protein belongs to the CbxX/CfxQ family.

Its function is as follows. Seems to be necessary for the expression of RuBisCO. This chain is Protein CbxX, chromosomal (cbxXC), found in Cupriavidus necator (strain ATCC 17699 / DSM 428 / KCTC 22496 / NCIMB 10442 / H16 / Stanier 337) (Ralstonia eutropha).